Consider the following 257-residue polypeptide: Enolase-phosphatase E1 (257 aa).

Mg(2+)-binding residues include aspartate 16 and glutamate 18. Substrate-binding positions include 150-151 (SS) and lysine 184. Mg(2+) is bound at residue aspartate 209.

This sequence belongs to the HAD-like hydrolase superfamily. MasA/MtnC family. Monomer. It depends on Mg(2+) as a cofactor.

The protein localises to the cytoplasm. The protein resides in the nucleus. The enzyme catalyses 5-methylsulfanyl-2,3-dioxopentyl phosphate + H2O = 1,2-dihydroxy-5-(methylsulfanyl)pent-1-en-3-one + phosphate. It participates in amino-acid biosynthesis; L-methionine biosynthesis via salvage pathway; L-methionine from S-methyl-5-thio-alpha-D-ribose 1-phosphate: step 3/6. Its pathway is amino-acid biosynthesis; L-methionine biosynthesis via salvage pathway; L-methionine from S-methyl-5-thio-alpha-D-ribose 1-phosphate: step 4/6. Its function is as follows. Bifunctional enzyme that catalyzes the enolization of 2,3-diketo-5-methylthiopentyl-1-phosphate (DK-MTP-1-P) into the intermediate 2-hydroxy-3-keto-5-methylthiopentenyl-1-phosphate (HK-MTPenyl-1-P), which is then dephosphorylated to form the acireductone 1,2-dihydroxy-3-keto-5-methylthiopentene (DHK-MTPene). The chain is Enolase-phosphatase E1 (Enoph1) from Mus musculus (Mouse).